The chain runs to 467 residues: MDIKEDDESRVITPTELQLHDSVTARTGTLWTAVAHIITGVIGAGVLSLAWATAELGWIAGPAALIAFAGVTLLSAFLLSDCYRFPDPNNGPLRLNSYSQAVKLYLGKKNEIVCGVVVYISLFGCGIAYTIVIATCSRAIMKSNCYHRNGHNATCSYGDNNNYFMVLFGLTQIFMSQIPNFHNMVWLSLVAAIMSFTYSFIGIGLALGKIIENRKIEGSIRGIPAENRGEKVWIVFQALGNIAFSYPFSIILLEIQDTLRSPPAEKQTMKKASTVAVFIQTFFFFCCGCFGYAAFGDSTPGNLLTGFGFYEPFWLVDFANACIVLHLVGGYQVYSQPIFAAAERSLTKKYPENKFIARFYGFKLPLLRGETVRLNPMRMCLRTMYVLITTGVAVMFPYFNEVLGVVGALAFWPLAVYFPVEMCILQKKIRSWTRPWLLLRGFSFVCLLVCLLSLVGSIYGLVGAKFG.

At 1-29 (MDIKEDDESRVITPTELQLHDSVTARTGT) the chain is on the cytoplasmic side. A helical transmembrane segment spans residues 30–50 (LWTAVAHIITGVIGAGVLSLA). Residues 51–58 (WATAELGW) lie on the Extracellular side of the membrane. Residues 59–79 (IAGPAALIAFAGVTLLSAFLL) form a helical membrane-spanning segment. Over 80 to 111 (SDCYRFPDPNNGPLRLNSYSQAVKLYLGKKNE) the chain is Cytoplasmic. Residues 112-132 (IVCGVVVYISLFGCGIAYTIV) traverse the membrane as a helical segment. Residues 133–163 (IATCSRAIMKSNCYHRNGHNATCSYGDNNNY) are Extracellular-facing. The next 2 helical transmembrane spans lie at 164 to 184 (FMVLFGLTQIFMSQIPNFHNM) and 185 to 205 (VWLSLVAAIMSFTYSFIGIGL). The Extracellular segment spans residues 206 to 231 (ALGKIIENRKIEGSIRGIPAENRGEK). A helical membrane pass occupies residues 232–252 (VWIVFQALGNIAFSYPFSIIL). Over 253 to 274 (LEIQDTLRSPPAEKQTMKKAST) the chain is Cytoplasmic. The helical transmembrane segment at 275-295 (VAVFIQTFFFFCCGCFGYAAF) threads the bilayer. Residues 296–312 (GDSTPGNLLTGFGFYEP) are Extracellular-facing. The chain crosses the membrane as a helical span at residues 313–333 (FWLVDFANACIVLHLVGGYQV). Residues 334–383 (YSQPIFAAAERSLTKKYPENKFIARFYGFKLPLLRGETVRLNPMRMCLRT) are Cytoplasmic-facing. 2 consecutive transmembrane segments (helical) span residues 384–404 (MYVLITTGVAVMFPYFNEVLG) and 405–425 (VVGALAFWPLAVYFPVEMCIL). Over 426 to 443 (QKKIRSWTRPWLLLRGFS) the chain is Cytoplasmic. The helical transmembrane segment at 444–464 (FVCLLVCLLSLVGSIYGLVGA) threads the bilayer. At 465 to 467 (KFG) the chain is on the extracellular side.

It belongs to the amino acid/polyamine transporter 2 family. Amino acid/auxin permease (AAAP) (TC 2.A.18.2) subfamily.

It localises to the cell membrane. Functionally, amino acid-proton symporter. Stereospecific transporter with a broad specificity for neutral amino acids. This is Probable amino acid permease 7 (AAP7) from Arabidopsis thaliana (Mouse-ear cress).